A 63-amino-acid chain; its full sequence is Large ribosomal subunit protein bL28 (63 aa).

Positions 1-20 (MSRRCAITGKGPMVGNNVSH) are disordered.

The protein belongs to the bacterial ribosomal protein bL28 family.

This is Large ribosomal subunit protein bL28 from Campylobacter curvus (strain 525.92).